A 354-amino-acid chain; its full sequence is Guanine nucleotide-binding protein G(i) subunit alpha-3 (354 aa).

The N-myristoyl glycine moiety is linked to residue Gly-2. Cys-3 is lipidated: S-palmitoyl cysteine. Residues Lys-32–Tyr-354 form the G-alpha domain. The tract at residues Lys-35–Thr-48 is G1 motif. Positions 42, 43, 44, 45, 46, 47, 48, 150, 151, 175, 176, 177, 178, 179, 180, 181, 201, 203, 269, 270, 272, 273, 325, 326, and 327 each coordinate GTP. A Mg(2+)-binding site is contributed by Ser-47. Residues Asp-173 to Thr-181 are G2 motif. Thr-181 is a Mg(2+) binding site. Positions Phe-196–Arg-205 are G3 motif. The interval Ile-265 to Asp-272 is G4 motif. The tract at residues Thr-324 to Thr-329 is G5 motif.

It belongs to the G-alpha family. G(i/o/t/z) subfamily. In terms of assembly, heterotrimeric G proteins are composed of 3 units; alpha, beta and gamma. The alpha subunit contains the guanine nucleotide binding site. GTP binding causes dissociation of the heterotrimer, liberating the individual subunits so that they can interact with downstream effector proteins. Forms a complex with CCDC88A/GIV and EGFR which leads to enhanced EGFR signaling and triggering of cell migration; ligand stimulation is required for recruitment of GNAI3 to the complex. Interacts (inactive GDP-bound form) with CCDC88A/GIV (via GBA motif); the interaction leads to activation of GNAI3. Interacts (inactive GDP-bound form) with CCDC88C/DAPLE (via GBA motif); the interaction leads to activation of GNAI3. Interacts (inactive GDP-bound form) with NUCB1 (via GBA motif) and NUCB2 (via GBA motif); the interaction leads to activation of GNAI3. Interacts (inactive GDP-bound form) with PLCD4 (via GBA motif); the interaction leads to activation of GNAI3. Interacts with INSR; the interaction is probably mediated by CCDC88A/GIV. Interacts with GPSM1. Interacts (GDP-bound form) with GPSM2 (via GoLoco domains). Does not interact with RGS2. Interacts with RGS8 and RGS10; this strongly enhances the intrinsic GTPase activity. Interacts with RGS16; this strongly enhances the intrinsic GTPase activity. Interacts with RGS12. Interacts (via active GTP- or inactive GDP-bound form) with RGS14. Interacts (via active GTP-bound form) with TRPC5 (via ANK repeats) in a homotetrameric ion channel; the interaction is direct and activates the channel activity.

The protein resides in the cytoplasm. Its subcellular location is the cell membrane. It is found in the cytoskeleton. The protein localises to the microtubule organizing center. It localises to the centrosome. In terms of biological role, heterotrimeric guanine nucleotide-binding proteins (G proteins) function as transducers downstream of G protein-coupled receptors (GPCRs) in numerous signaling cascades. The alpha chain contains the guanine nucleotide binding site and alternates between an active, GTP-bound state and an inactive, GDP-bound state. Signaling by an activated GPCR promotes GDP release and GTP binding. The alpha subunit has a low GTPase activity that converts bound GTP to GDP, thereby terminating the signal. Both GDP release and GTP hydrolysis are modulated by numerous regulatory proteins. Signaling is mediated via effector proteins, such as adenylate cyclase. Inhibits adenylate cyclase activity, leading to decreased intracellular cAMP levels. Stimulates the activity of receptor-regulated K(+) channels. The active GTP-bound form prevents the association of RGS14 with centrosomes and is required for the translocation of RGS14 from the cytoplasm to the plasma membrane. May play a role in cell division. The active GTP-bound form activates the calcium permeant TRPC5 ion channels. The sequence is that of Guanine nucleotide-binding protein G(i) subunit alpha-3 (Gnai3) from Mus musculus (Mouse).